The chain runs to 368 residues: Peptidoglycan-recognition protein LA (368 aa).

Topologically, residues 1-127 are cytoplasmic; it reads MFEENNSPTT…KSPSRRVTRN (127 aa). 2 disordered regions span residues 21-46 and 101-122; these read QRAS…GLPL and INSN…SPSR. Composition is skewed to low complexity over residues 33-43 and 102-113; these read TSAGSSTSSSG and NSNNANGNGNAN. The helical transmembrane segment at 128–148 threads the bilayer; it reads TILLITLILLVLATGLIVLYV. The Extracellular portion of the chain corresponds to 149–368; sequence ELNRPKPELP…MKTESWDAKQ (220 aa). A disulfide bridge connects residues C221 and C227. The N-acetylmuramoyl-L-alanine amidase domain occupies 233–320; that stretch reads TIQDSAIAEK…DVDYKLVAQN (88 aa). N273 and N320 each carry an N-linked (GlcNAc...) asparagine glycan.

It belongs to the N-acetylmuramoyl-L-alanine amidase 2 family. As to expression, expressed in uninduced hemocytes and mbn-2 cells.

The protein localises to the cell membrane. Peptidoglycan-recognition protein probably involved in innate immunity by binding to peptidoglycans (PGN) of bacteria and activating the immune response. The protein is Peptidoglycan-recognition protein LA (PGRP-LA) of Drosophila melanogaster (Fruit fly).